We begin with the raw amino-acid sequence, 281 residues long: MEANTRSTGRLPAAFLTPGSSSFMDFLGEHQPEMLPGNRQLPPVQGVIEAPHGTTIVAVTFPGGVVLAGDRRATMGNMIAQRDIEKVFPADEYSAVGIAGTAGLAVEMVKLFQLELEHFEKVEGAQLSLEGKANRLSTMIRSNLGMAMQGLAVVPLFAGYDVDRGRGRIFSYDVTGGRSEERHFATTGSGSVFARGAMKKLFRDDLTEEQATTLVVQALYDAADDDSATGGPDVARRIYPIITVITEDGFRRLGEDEAAELAGSVLQARLEQPDGPRAALL.

Positions 1–53 are cleaved as a propeptide — removed in mature form; by autocatalysis; the sequence is MEANTRSTGRLPAAFLTPGSSSFMDFLGEHQPEMLPGNRQLPPVQGVIEAPHG. The active-site Nucleophile is threonine 54.

This sequence belongs to the peptidase T1B family. As to quaternary structure, the 20S proteasome core is composed of 14 alpha and 14 beta subunits that assemble into four stacked heptameric rings, resulting in a barrel-shaped structure. The two inner rings, each composed of seven catalytic beta subunits, are sandwiched by two outer rings, each composed of seven alpha subunits. The catalytic chamber with the active sites is on the inside of the barrel. Has probably a gated structure, the ends of the cylinder being occluded by the N-termini of the alpha-subunits. Is likely capped by the proteasome-associated ATPase, ARC.

The protein localises to the cytoplasm. It catalyses the reaction Cleavage of peptide bonds with very broad specificity.. The protein operates within protein degradation; proteasomal Pup-dependent pathway. With respect to regulation, the formation of the proteasomal ATPase ARC-20S proteasome complex, likely via the docking of the C-termini of ARC into the intersubunit pockets in the alpha-rings, may trigger opening of the gate for substrate entry. Interconversion between the open-gate and close-gate conformations leads to a dynamic regulation of the 20S proteasome proteolysis activity. Peptidolytic activity is completely inhibited by lactacystin, and to a lesser extent, by N-acetyl-Leu-Leu-norleucinal (Ac-LLnL) and benzoyloxycarbonyl-Leu-Leu-Leu-vinylsulfone (Z-LLL-VS) in vitro. Its function is as follows. Component of the proteasome core, a large protease complex with broad specificity involved in protein degradation. The S.coelicolor proteasome is able to cleave oligopeptides after hydrophobic residues, but not after basic or acidic residues, thus displaying chymotrypsin-like activity but not trypsin-like activity. This is Proteasome subunit beta from Streptomyces coelicolor (strain ATCC BAA-471 / A3(2) / M145).